We begin with the raw amino-acid sequence, 202 residues long: uncharacterized protein (202 aa).

A helical membrane pass occupies residues 18-38; the sequence is FLIFLIFLSVLGCGITISGCI.

It is found in the membrane. This is an uncharacterized protein from Methanocaldococcus jannaschii (strain ATCC 43067 / DSM 2661 / JAL-1 / JCM 10045 / NBRC 100440) (Methanococcus jannaschii).